A 734-amino-acid chain; its full sequence is Photosystem I P700 chlorophyll a apoprotein A2 (734 aa).

Helical transmembrane passes span 46-69 (IFAS…FHVA), 135-158 (LYSG…LHLQ), 175-199 (LNHH…HVAI), 273-291 (MAHH…GHMY), 330-353 (LHFQ…QHMY), 369-395 (AALY…IFFI), 417-439 (AIIS…LYVH), and 517-535 (FLVH…LILV). The [4Fe-4S] cluster site is built by cysteine 559 and cysteine 568. Transmembrane regions (helical) follow at residues 575–596 (AFYL…YWHW) and 643–665 (LSVW…MFLI). Positions 654, 662, and 670 each coordinate chlorophyll a. Tryptophan 671 provides a ligand contact to phylloquinone. A helical membrane pass occupies residues 707-727 (LVGLAHFSVGYIFTYAAFLIA).

It belongs to the PsaA/PsaB family. In terms of assembly, the PsaA/B heterodimer binds the P700 chlorophyll special pair and subsequent electron acceptors. PSI consists of a core antenna complex that captures photons, and an electron transfer chain that converts photonic excitation into a charge separation. The eukaryotic PSI reaction center is composed of at least 11 subunits. It depends on P700 is a chlorophyll a/chlorophyll a' dimer, A0 is one or more chlorophyll a, A1 is one or both phylloquinones and FX is a shared 4Fe-4S iron-sulfur center. as a cofactor.

The protein localises to the plastid. It is found in the chloroplast thylakoid membrane. The enzyme catalyses reduced [plastocyanin] + hnu + oxidized [2Fe-2S]-[ferredoxin] = oxidized [plastocyanin] + reduced [2Fe-2S]-[ferredoxin]. Its function is as follows. PsaA and PsaB bind P700, the primary electron donor of photosystem I (PSI), as well as the electron acceptors A0, A1 and FX. PSI is a plastocyanin-ferredoxin oxidoreductase, converting photonic excitation into a charge separation, which transfers an electron from the donor P700 chlorophyll pair to the spectroscopically characterized acceptors A0, A1, FX, FA and FB in turn. Oxidized P700 is reduced on the lumenal side of the thylakoid membrane by plastocyanin. The chain is Photosystem I P700 chlorophyll a apoprotein A2 from Antirrhinum majus (Garden snapdragon).